A 452-amino-acid polypeptide reads, in one-letter code: Exodeoxyribonuclease 7 large subunit (452 aa).

This sequence belongs to the XseA family. As to quaternary structure, heterooligomer composed of large and small subunits.

The protein localises to the cytoplasm. The catalysed reaction is Exonucleolytic cleavage in either 5'- to 3'- or 3'- to 5'-direction to yield nucleoside 5'-phosphates.. Bidirectionally degrades single-stranded DNA into large acid-insoluble oligonucleotides, which are then degraded further into small acid-soluble oligonucleotides. In Lysinibacillus sphaericus (strain C3-41), this protein is Exodeoxyribonuclease 7 large subunit.